A 517-amino-acid polypeptide reads, in one-letter code: Protein translocase subunit SecD (517 aa).

Helical transmembrane passes span 5 to 25 (LRWI…FPLD), 357 to 377 (IWAG…YYKF), 380 to 400 (FIAS…MGMF), 407 to 427 (PGIA…VLIF), 455 to 475 (IIDS…FGTG), and 479 to 499 (GFAV…VTLS).

It belongs to the SecD/SecF family. SecD subfamily. As to quaternary structure, forms a complex with SecF. Part of the essential Sec protein translocation apparatus which comprises SecA, SecYEG and auxiliary proteins SecDF. Other proteins may also be involved.

It localises to the cell inner membrane. Part of the Sec protein translocase complex. Interacts with the SecYEG preprotein conducting channel. SecDF uses the proton motive force (PMF) to complete protein translocation after the ATP-dependent function of SecA. This Calditerrivibrio nitroreducens (strain DSM 19672 / NBRC 101217 / Yu37-1) protein is Protein translocase subunit SecD.